We begin with the raw amino-acid sequence, 153 residues long: Pro-corazonin (153 aa).

An N-terminal signal peptide occupies residues 1–20 (MLRLLLLPLFLFTLSMACMG). Position 21 is a pyrrolidone carboxylic acid (Gln21). The residue at position 31 (Asn31) is an Asparagine amide. Residues 64–153 (LERCLLQLQH…AVEPNDYGKH (90 aa)) constitute a propeptide that is removed on maturation.

The protein belongs to the corazonin family. As to expression, expression is restricted to 24 neurons in the larval CNS (8 in the brain and 16 in the ventral nerve cord) and 12-16 neurons in the pars lateralis of the adult brain.

It is found in the secreted. Cardioactive peptide. Corazonin is probably involved in the physiological regulation of the heart beat. Clock (Clk) and cycle (cyc) proteins negatively regulate Crz transcription in a cell-specific manner. This is Pro-corazonin (Crz) from Drosophila virilis (Fruit fly).